A 2737-amino-acid polypeptide reads, in one-letter code: Non-reducing polyketide synthase ATEG_07661 (2737 aa).

The N-terminal acylcarrier protein transacylase domain (SAT) stretch occupies residues 75-245 (SRSLAELDSW…VRYDQTRATV (171 aa)). Catalysis depends on Cys154, which acts as the Nucleophile; for transacylase activity. His276 (proton donor/acceptor; for transacylase activity) is an active-site residue. The 428-residue stretch at 427–854 (NEAIAIVGMS…GSNASMIITE (428 aa)) folds into the Ketosynthase family 3 (KS3) domain. Active-site for beta-ketoacyl synthase activity residues include Cys603, His738, and His777. A malonyl-CoA:ACP transacylase (MAT) region spans residues 969-1260 (FGGQVSRFVG…IMASRAIAQS (292 aa)). An N-terminal hotdog fold region spans residues 1368 to 1503 (LQSLWNFVEF…ASVEMRAPTD (136 aa)). Residues 1368 to 1683 (LQSLWNFVEF…YGRVAKASMS (316 aa)) form the PKS/mFAS DH domain. The product template (PT) domain stretch occupies residues 1399-1681 (FVLSHVIAQT…VQYGRVAKAS (283 aa)). The active-site Proton acceptor; for dehydratase activity is His1403. The segment at 1535-1683 (VEVLQGRNVY…YGRVAKASMS (149 aa)) is C-terminal hotdog fold. The Proton donor; for dehydratase activity role is filled by Asp1592. A disordered region spans residues 1724 to 1747 (SRTTKKKAKASKSKSSVKKDKAPS). Over residues 1725–1739 (RTTKKKAKASKSKSS) the composition is skewed to basic residues. The region spanning 1750 to 1824 (RDITDEVRNL…KFVACVSNAL (75 aa)) is the Carrier domain. An O-(pantetheine 4'-phosphoryl)serine modification is found at Ser1784. A disordered region spans residues 1827–1876 (PNQGQSSIDEDDEDDEHSEDSSNESSSAASDEDASSGLESPDTGILTPED). Over residues 1834 to 1848 (IDEDDEDDEHSEDSS) the composition is skewed to acidic residues. A compositionally biased stretch (low complexity) spans 1849–1866 (NESSSAASDEDASSGLES). The tract at residues 2094–2270 (ADRIQSSSGS…GFGHVDWTDG (177 aa)) is methyltransferase domain. The NADPH-binding domain stretch occupies residues 2362–2665 (VVLVTGATGS…IPFKDWISRV (304 aa)).

It participates in secondary metabolite biosynthesis. In terms of biological role, non-reducing polyketide synthase; part of the cluster B that mediates the biosynthesis of azasperpyranones, members of the azaphilone family that exhibit anti-cancer activities. Azasperpyranones are synthesized by 2 clusters, A and B. Cluster A is responsible for the production of the polyhydric phenol moiety while the azaphilonoid scaffold is produced by the cluster B. The non-reducing polyketide synthase ATEG_03629 produces 5-methyl orsellinic acid, which is then reduced to 5-methyl orsellinic aldehyde by the NRPS-like protein ATEG_03630. 5-methyl orsellinic aldehyde is then first hydroxylated by the FAD-dependent monooxygenase ATEG_03635 and subsequently hydroxylated by the cytochrome P450 monooxygenase ATEG_03631 to produce the unstable polyhydric phenol precursor of azasperpyranones. On the other hand, the polyketide synthase ATEG_07659 is responsible for producing the 3,5-dimethyloctadienone moiety from acetyl-CoA, three malonyl-CoA, and two S-adenosyl methionines (SAM). The 3,5-dimethyloctadienone moiety is then loaded onto the SAT domain of ATEG_07661 and extended with four malonyl-CoA and one SAM, which leads to the formation of 2,4-dihydroxy-6-(5,7-dimethyl-2-oxo-trans-3-trans-5-nonadienyl)-3-methylbenzaldehyde (compound 8) after reductive release and aldol condensation. The FAD-dependent monooxygenase ATEG_07662 is the next enzyme in the biosynthesis sequence and hydroxylates the side chain at the benzylic position of compound 8. In Aspergillus nidulans, afoF, the ortholog of the FAD-dependent oxygenase ATEG_07660, is the key enzyme for the biosynthesis of asperfuranone by catalyzing the hydroxylation at C-8 of to prevent the formation of a six-membered ring hemiacetal intermediate and thus facilitating the formation of a five-membered ring to produce asperfuranone. In Aspergillus terreus, ATEG_07660 is probably not functional, which leads to the formation of the six-membered ring hemiacetal intermediate presperpyranone instead of asperfuranone. Finally, ATEG_03636 is involved in the condensation of the polyhydric phenol moiety produced by cluster A and the perasperpyranone precursor produced by cluster B, to yield azasperpyranone A. Further modifications of azasperpyranone A result in the production of derivatives, including azasperpyranone B to F. In Aspergillus terreus (strain NIH 2624 / FGSC A1156), this protein is Non-reducing polyketide synthase ATEG_07661.